We begin with the raw amino-acid sequence, 740 residues long: Phosphoribosylformylglycinamidine synthase subunit PurL (740 aa).

His-53 is a catalytic residue. ATP is bound by residues Tyr-56 and Lys-95. Mg(2+) is bound at residue Glu-97. Residues 98–101 and Arg-120 contribute to the substrate site; that span reads SHNH. The Proton acceptor role is filled by His-99. Asp-121 contacts Mg(2+). Residue Gln-244 participates in substrate binding. Asp-272 provides a ligand contact to Mg(2+). 316–318 provides a ligand contact to substrate; that stretch reads ESQ. Residues Asp-497 and Gly-534 each contribute to the ATP site. Asn-535 provides a ligand contact to Mg(2+). Ser-537 lines the substrate pocket.

The protein belongs to the FGAMS family. In terms of assembly, monomer. Part of the FGAM synthase complex composed of 1 PurL, 1 PurQ and 2 PurS subunits.

The protein localises to the cytoplasm. It catalyses the reaction N(2)-formyl-N(1)-(5-phospho-beta-D-ribosyl)glycinamide + L-glutamine + ATP + H2O = 2-formamido-N(1)-(5-O-phospho-beta-D-ribosyl)acetamidine + L-glutamate + ADP + phosphate + H(+). The protein operates within purine metabolism; IMP biosynthesis via de novo pathway; 5-amino-1-(5-phospho-D-ribosyl)imidazole from N(2)-formyl-N(1)-(5-phospho-D-ribosyl)glycinamide: step 1/2. Part of the phosphoribosylformylglycinamidine synthase complex involved in the purines biosynthetic pathway. Catalyzes the ATP-dependent conversion of formylglycinamide ribonucleotide (FGAR) and glutamine to yield formylglycinamidine ribonucleotide (FGAM) and glutamate. The FGAM synthase complex is composed of three subunits. PurQ produces an ammonia molecule by converting glutamine to glutamate. PurL transfers the ammonia molecule to FGAR to form FGAM in an ATP-dependent manner. PurS interacts with PurQ and PurL and is thought to assist in the transfer of the ammonia molecule from PurQ to PurL. This Rhodospirillum rubrum (strain ATCC 11170 / ATH 1.1.1 / DSM 467 / LMG 4362 / NCIMB 8255 / S1) protein is Phosphoribosylformylglycinamidine synthase subunit PurL.